The sequence spans 137 residues: Small ribosomal subunit protein uS12 (137 aa).

Asp102 is modified (3-methylthioaspartic acid).

This sequence belongs to the universal ribosomal protein uS12 family. Part of the 30S ribosomal subunit. Contacts proteins S8 and S17. May interact with IF1 in the 30S initiation complex.

With S4 and S5 plays an important role in translational accuracy. Its function is as follows. Interacts with and stabilizes bases of the 16S rRNA that are involved in tRNA selection in the A site and with the mRNA backbone. Located at the interface of the 30S and 50S subunits, it traverses the body of the 30S subunit contacting proteins on the other side and probably holding the rRNA structure together. The combined cluster of proteins S8, S12 and S17 appears to hold together the shoulder and platform of the 30S subunit. The sequence is that of Small ribosomal subunit protein uS12 from Mesoplasma florum (strain ATCC 33453 / NBRC 100688 / NCTC 11704 / L1) (Acholeplasma florum).